Consider the following 545-residue polypeptide: E3 ubiquitin-protein ligase ipaH9.8 (545 aa).

An interaction with target proteins region spans residues 1–242 (MLPINNNFSL…YHGPRIYFSM (242 aa)). LRR repeat units lie at residues 57–77 (NSDE…NLPA), 78–99 (QITL…PVTL), 100–117 (KKLY…VLPP), 118–139 (ALES…PDSL), 140–157 (LTMN…SLPQ), 158–179 (ALKN…SEGN), 182–203 (VVRE…ILNL), and 205–228 (NECS…QRLT). Residues 243-250 (SDGQQNTL) form a linker region. Residues 251–545 (HRPLADAVTA…SENGSQLHHS (295 aa)) are E3 ubiquitin-protein ligase catalytic domain. In terms of domain architecture, NEL spans 253–545 (PLADAVTAWF…SENGSQLHHS (293 aa)). Cys-337 acts as the Glycyl thioester intermediate in catalysis.

Belongs to the LRR-containing bacterial E3 ligase family. As to quaternary structure, also interacts with human and mouse U2AF1 (U2AF35). Post-translationally, ubiquitinated in the presence of host E1 ubiquitin-activating enzyme, E2 ubiquitin-conjugating enzyme and ubiquitin.

The protein resides in the secreted. The protein localises to the host cytoplasm. It localises to the host nucleus. It catalyses the reaction S-ubiquitinyl-[E2 ubiquitin-conjugating enzyme]-L-cysteine + [acceptor protein]-L-lysine = [E2 ubiquitin-conjugating enzyme]-L-cysteine + N(6)-ubiquitinyl-[acceptor protein]-L-lysine.. Exists in an autoinhibited state in the absence of substrate protein, due to interactions of the leucine-rich repeats with NEL domain. Is activated upon binding to a substrate protein. Its function is as follows. Effector E3 ubiquitin ligase that interferes with host's ubiquitination pathway and modulates the acute inflammatory responses, thus facilitating bacterial colonization within the host cell. Interacts with IKBKG (NEMO) and TNIP1 (ABIN-1), a ubiquitin-binding adapter protein, which results in TNIP1-dependent 'Lys-27'-linked polyubiquitination of IKBKG. Consequently, polyubiquitinated IKBKG undergoes proteasome-dependent degradation, which perturbs NF-kappa-B activation during bacterial infection. Mediates polyubiquitination of host U2AF1, leading to its proteasomal degradation. Catalyzes 'Lys-48'-linked polyubiquitination and subsequent degradation of a subset of host guanylate-binding proteins (GBP1, GBP2, GBP4 and GBP6), thereby suppressing host cell defense. In contrast, host GBP3 and GBP7 are not ubiquitinated by IpaH9.8. Uses UBE2D2 (UBCH5B) as an E2 ubiquitin-conjugating enzyme. The chain is E3 ubiquitin-protein ligase ipaH9.8 (ipaH9.8) from Shigella sonnei (strain Ss046).